We begin with the raw amino-acid sequence, 303 residues long: D-alanine--D-alanine ligase (303 aa).

The ATP-grasp domain occupies 104–300 (KLMWQAVGLP…FEKLVERVLE (197 aa)). 132–187 (IAKLGLPVFVKPSSEGSSVGVTKVKTVEQLLPAVEEALKFDSIVLVEAFLAGKEYS) is a binding site for ATP. The Mg(2+) site is built by Asp254, Glu267, and Asn269.

This sequence belongs to the D-alanine--D-alanine ligase family. It depends on Mg(2+) as a cofactor. Mn(2+) is required as a cofactor.

It is found in the cytoplasm. It catalyses the reaction 2 D-alanine + ATP = D-alanyl-D-alanine + ADP + phosphate + H(+). It participates in cell wall biogenesis; peptidoglycan biosynthesis. Functionally, cell wall formation. The polypeptide is D-alanine--D-alanine ligase (Actinobacillus pleuropneumoniae serotype 5b (strain L20)).